A 59-amino-acid chain; its full sequence is Large ribosomal subunit protein bL32 (59 aa).

This sequence belongs to the bacterial ribosomal protein bL32 family.

This is Large ribosomal subunit protein bL32 from Lactiplantibacillus plantarum (strain ATCC BAA-793 / NCIMB 8826 / WCFS1) (Lactobacillus plantarum).